The primary structure comprises 261 residues: CD40 ligand (261 aa).

Residues 1 to 22 (MIETYNQPVPRSAATGPPVSMK) lie on the Cytoplasmic side of the membrane. The helical; Signal-anchor for type II membrane protein transmembrane segment at 23 to 43 (IFMYLLTVFLITQMIGSALFA) threads the bilayer. At 44–261 (VYLHRRLDKI…GFTSFGLLKL (218 aa)) the chain is on the extracellular side. One can recognise a THD domain in the interval 122–261 (IAAHVISEAS…GFTSFGLLKL (140 aa)). Residues cysteine 178 and cysteine 218 are joined by a disulfide bond. N-linked (GlcNAc...) asparagine glycosylation occurs at asparagine 240.

The protein belongs to the tumor necrosis factor family. Homotrimer. Interacts with CD28. CD40 ligand, soluble form: Exists as either a monomer or a homotrimer. Forms a ternary complex between CD40 and integrins for CD40-CD40LG signaling. The soluble form derives from the membrane form by proteolytic processing.

Its subcellular location is the cell membrane. The protein resides in the cell surface. It is found in the secreted. Functionally, cytokine that acts as a ligand to CD40/TNFRSF5. Costimulates T-cell proliferation and cytokine production. Its cross-linking on T-cells generates a costimulatory signal which enhances the production of IL4 and IL10 in conjunction with the TCR/CD3 ligation and CD28 costimulation. Induces the activation of NF-kappa-B. Induces the activation of kinases MAPK8 and PAK2 in T-cells. Mediates B-cell proliferation in the absence of co-stimulus as well as IgE production in the presence of IL4. Involved in immunoglobulin class switching. Acts as a ligand for integrins, specifically ITGA5:ITGB1 and ITGAV:ITGB3; both integrins and the CD40 receptor are required for activation of CD40-CD40LG signaling, which have cell-type dependent effects, such as B-cell activation, NF-kappa-B signaling and anti-apoptotic signaling. The polypeptide is CD40 ligand (CD40LG) (Callithrix jacchus (White-tufted-ear marmoset)).